A 136-amino-acid chain; its full sequence is FK506-binding protein 2 (136 aa).

The signal sequence occupies residues 1-17; the sequence is MLSQIWILFTFMVCVIA. Residues 45–134 form the PPIase FKBP-type domain; the sequence is GDMVSVHYTG…DFDVELVDIA (90 aa).

The protein belongs to the FKBP-type PPIase family. FKBP2 subfamily.

Its subcellular location is the endoplasmic reticulum. It carries out the reaction [protein]-peptidylproline (omega=180) = [protein]-peptidylproline (omega=0). Inhibited by both FK506 and rapamycin. PPIases accelerate the folding of proteins. It catalyzes the cis-trans isomerization of proline imidic peptide bonds in oligopeptides. The protein is FK506-binding protein 2 (FPR2) of Candida glabrata (strain ATCC 2001 / BCRC 20586 / JCM 3761 / NBRC 0622 / NRRL Y-65 / CBS 138) (Yeast).